The sequence spans 266 residues: MLPYPFSYFSSIWGFRKPLSKRFELNWFQLLFTSIFLISLSMVPIAIQNSSQETYPLETFIDNVYEPLTDKVVQDLSEHATIVDGTLTYTGTASQAPSVVIGPSQIKELPKDLQLHFDTNELVISKESKELTRISYRAIQTEGFKSKDSLTQAISKDWYQQNRVYISLFLVLGASFLFGLNFFIVSLGASLLLYITKKSRLFSFRTFKECYHFILNCLGLPTLITLILGLFGQNMTTLITVQNILFVLYLVTIFYKTHFRDPNYHK.

Its function is as follows. Has a role in maltotetraose utilization. The chain is Maltodextrose utilization protein MalA (malA) from Streptococcus pneumoniae (strain ATCC BAA-255 / R6).